Consider the following 341-residue polypeptide: uncharacterized protein (341 aa).

Catalysis depends on residues Ser111, Asp247, and His275.

It belongs to the DmpD/TodF/XylF esterase family.

This is an uncharacterized protein from Mycobacterium bovis (strain ATCC BAA-935 / AF2122/97).